Consider the following 1131-residue polypeptide: Phytochrome B1 (1131 aa).

The segment covering 1–11 (MASGSRTKHSY) has biased composition (basic residues). The disordered stretch occupies residues 1-26 (MASGSRTKHSYHNSSQGQAQSSGTSN). A compositionally biased stretch (low complexity) spans 14–25 (SSQGQAQSSGTS). One can recognise a GAF domain in the interval 229-408 (DIKLLCDTVV…AFGLQLNMEL (180 aa)). Phytochromobilin is bound at residue Cys-334. PAS domains follow at residues 622 to 693 (VARE…LRGV) and 756 to 808 (DYKA…GEIF). Positions 904–1124 (YICQEVKSPL…MIILDLPMTR (221 aa)) constitute a Histidine kinase domain.

It belongs to the phytochrome family. Homodimer. In terms of processing, contains one covalently linked phytochromobilin chromophore.

Functionally, regulatory photoreceptor which exists in two forms that are reversibly interconvertible by light: the Pr form that absorbs maximally in the red region of the spectrum and the Pfr form that absorbs maximally in the far-red region. Photoconversion of Pr to Pfr induces an array of morphogenic responses, whereas reconversion of Pfr to Pr cancels the induction of those responses. Pfr controls the expression of a number of nuclear genes including those encoding the small subunit of ribulose-bisphosphate carboxylase, chlorophyll A/B binding protein, protochlorophyllide reductase, rRNA, etc. It also controls the expression of its own gene(s) in a negative feedback fashion. The sequence is that of Phytochrome B1 from Solanum lycopersicum (Tomato).